The sequence spans 540 residues: Keratin, type II cytoskeletal 73 (540 aa).

Positions 1 to 131 (MSRQFTYKSG…DPEIQKVCAQ (131 aa)) are head. Positions 132 to 167 (EREQIKALNNKFASFIDKVRFLEQQNQVLGTKWELL) are coil 1A. Residues 132–445 (EREQIKALNN…KLLEGEECRM (314 aa)) enclose the IF rod domain. The linker 1 stretch occupies residues 168–186 (QQQDLDNCKNNLEPILEGY). A coil 1B region spans residues 187–278 (ISNLRKQLEM…CLYEGEIAQM (92 aa)). Residues 279 to 302 (QSHISDTSVILSMDNNRNLDLNSI) are linker 12. A coil 2 region spans residues 303 to 441 (IAEVRAQYED…ATYRKLLEGE (139 aa)). The segment at 442–540 (ECRMSGEYTN…LSSPTKKTPR (99 aa)) is tail. Residues 509 to 540 (GEAKTRLGSTSEIKDLLGKTPALSSPTKKTPR) are disordered. Residues 530 to 540 (ALSSPTKKTPR) show a composition bias toward polar residues.

This sequence belongs to the intermediate filament family. In terms of assembly, heterotetramer of two type I and two type II keratins.

Its function is as follows. Has a role in hair formation. Specific component of keratin intermediate filaments in the inner root sheath (IRS) of the hair follicle. The chain is Keratin, type II cytoskeletal 73 (KRT73) from Bos taurus (Bovine).